The chain runs to 556 residues: Glutamine--tRNA ligase (556 aa).

The short motif at 39–49 (PEPNGYLHIGH) is the 'HIGH' region element. Residues 40 to 42 (EPN) and 46 to 52 (HIGHAKS) each bind ATP. L-glutamine contacts are provided by Asp72 and Tyr217. Residues Thr236 and 267–268 (RL) each bind ATP. The short motif at 274-278 (LTSKR) is the 'KMSKS' region element.

It belongs to the class-I aminoacyl-tRNA synthetase family. Monomer.

The protein resides in the cytoplasm. It carries out the reaction tRNA(Gln) + L-glutamine + ATP = L-glutaminyl-tRNA(Gln) + AMP + diphosphate. This chain is Glutamine--tRNA ligase, found in Haemophilus ducreyi (strain 35000HP / ATCC 700724).